The following is a 174-amino-acid chain: Translation initiation factor IF-3 (174 aa).

The protein belongs to the IF-3 family. In terms of assembly, monomer.

Its subcellular location is the cytoplasm. IF-3 binds to the 30S ribosomal subunit and shifts the equilibrium between 70S ribosomes and their 50S and 30S subunits in favor of the free subunits, thus enhancing the availability of 30S subunits on which protein synthesis initiation begins. The polypeptide is Translation initiation factor IF-3 (Xanthobacter autotrophicus (strain ATCC BAA-1158 / Py2)).